We begin with the raw amino-acid sequence, 422 residues long: Gamma-glutamyl phosphate reductase (422 aa).

This sequence belongs to the gamma-glutamyl phosphate reductase family.

The protein localises to the cytoplasm. It carries out the reaction L-glutamate 5-semialdehyde + phosphate + NADP(+) = L-glutamyl 5-phosphate + NADPH + H(+). It functions in the pathway amino-acid biosynthesis; L-proline biosynthesis; L-glutamate 5-semialdehyde from L-glutamate: step 2/2. Functionally, catalyzes the NADPH-dependent reduction of L-glutamate 5-phosphate into L-glutamate 5-semialdehyde and phosphate. The product spontaneously undergoes cyclization to form 1-pyrroline-5-carboxylate. The protein is Gamma-glutamyl phosphate reductase of Nitrosomonas eutropha (strain DSM 101675 / C91 / Nm57).